We begin with the raw amino-acid sequence, 380 residues long: Cytochrome b (380 aa).

The next 4 helical transmembrane spans lie at 34–54 (FGSL…LLAM), 78–99 (WLIR…YLHI), 114–134 (WNTG…GYVL), and 179–199 (FFAL…IHLT). Heme b contacts are provided by His84 and His98. Residues His183 and His197 each contribute to the heme b site. His202 serves as a coordination point for a ubiquinone. 4 helical membrane-spanning segments follow: residues 227 to 247 (LKDI…ALFS), 289 to 309 (LGGV…PLLH), 321 to 341 (LSQL…WIGS), and 348 to 368 (FIII…ILFP).

This sequence belongs to the cytochrome b family. In terms of assembly, the cytochrome bc1 complex contains 11 subunits: 3 respiratory subunits (MT-CYB, CYC1 and UQCRFS1), 2 core proteins (UQCRC1 and UQCRC2) and 6 low-molecular weight proteins (UQCRH/QCR6, UQCRB/QCR7, UQCRQ/QCR8, UQCR10/QCR9, UQCR11/QCR10 and a cleavage product of UQCRFS1). This cytochrome bc1 complex then forms a dimer. Heme b serves as cofactor.

The protein resides in the mitochondrion inner membrane. Its function is as follows. Component of the ubiquinol-cytochrome c reductase complex (complex III or cytochrome b-c1 complex) that is part of the mitochondrial respiratory chain. The b-c1 complex mediates electron transfer from ubiquinol to cytochrome c. Contributes to the generation of a proton gradient across the mitochondrial membrane that is then used for ATP synthesis. This chain is Cytochrome b (MT-CYB), found in Oceanodroma microsoma (Least storm petrel).